The sequence spans 422 residues: MRLSKYYLPTLKEKPAHAKIISHQYSLRAGLIKQIASGIYSWLPLGLLVLKNIEDIIRDEMDKSGAIEVLMPCVQPANLWRESGRYDDYGKEMLRIKDRHEEDMLFGPTHEEVATDLIRDVVKSYKDLPLCLYQIQWKFRDEVRPRYGVMRGREFLMKDAYSFDVDYEGALNSYNLMYKTYIKIFKRMGLTPIGVRADTGPIGGNLSHEFHILANTGESTLYYDNKFSELLESEDVESLKSIYAVADDMHDPETCPISQEQLNVSKGIEIGHIFYFGDKYSKPMKASVTSQDGKNVNIHMGSYGIGVSRLVGAIIEAFHDDKGIIWPESVAPFRIGLINLQTKVTEAADKIYKALKSDEVLYDDTEGSVGVKFSRMDLIGLPWQIIVGKKAIDEKIVEVKNRATGEVKEMQIEEAINHFSTK.

This sequence belongs to the class-II aminoacyl-tRNA synthetase family. ProS type 2 subfamily. Homodimer.

Its subcellular location is the cytoplasm. The catalysed reaction is tRNA(Pro) + L-proline + ATP = L-prolyl-tRNA(Pro) + AMP + diphosphate. Its function is as follows. Catalyzes the attachment of proline to tRNA(Pro) in a two-step reaction: proline is first activated by ATP to form Pro-AMP and then transferred to the acceptor end of tRNA(Pro). The polypeptide is Proline--tRNA ligase (Wolbachia sp. subsp. Drosophila simulans (strain wRi)).